Consider the following 227-residue polypeptide: PKHD-type hydroxylase Mnod_1077 (227 aa).

Residues 78 to 178 (RVLPPLFNRY…RWSAFFWSQS (101 aa)) form the Fe2OG dioxygenase domain. Fe cation is bound by residues His-96, Asp-98, and His-159. Residue Arg-169 participates in 2-oxoglutarate binding.

Fe(2+) serves as cofactor. Requires L-ascorbate as cofactor.

This is PKHD-type hydroxylase Mnod_1077 from Methylobacterium nodulans (strain LMG 21967 / CNCM I-2342 / ORS 2060).